Here is a 313-residue protein sequence, read N- to C-terminus: Aspartate carbamoyltransferase catalytic subunit (313 aa).

Positions 59 and 60 each coordinate carbamoyl phosphate. Lysine 87 lines the L-aspartate pocket. Carbamoyl phosphate is bound by residues arginine 109, histidine 137, and glutamine 140. The L-aspartate site is built by arginine 170 and arginine 224. Residues glycine 265 and proline 266 each coordinate carbamoyl phosphate.

Belongs to the aspartate/ornithine carbamoyltransferase superfamily. ATCase family. As to quaternary structure, heterododecamer (2C3:3R2) of six catalytic PyrB chains organized as two trimers (C3), and six regulatory PyrI chains organized as three dimers (R2).

The catalysed reaction is carbamoyl phosphate + L-aspartate = N-carbamoyl-L-aspartate + phosphate + H(+). The protein operates within pyrimidine metabolism; UMP biosynthesis via de novo pathway; (S)-dihydroorotate from bicarbonate: step 2/3. In terms of biological role, catalyzes the condensation of carbamoyl phosphate and aspartate to form carbamoyl aspartate and inorganic phosphate, the committed step in the de novo pyrimidine nucleotide biosynthesis pathway. The polypeptide is Aspartate carbamoyltransferase catalytic subunit (Sinorhizobium medicae (strain WSM419) (Ensifer medicae)).